A 525-amino-acid polypeptide reads, in one-letter code: GMP synthase [glutamine-hydrolyzing] (525 aa).

Residues 8–207 (KILILDFGSQ…ALDICGCAAN (200 aa)) form the Glutamine amidotransferase type-1 domain. The Nucleophile role is filled by C85. Catalysis depends on residues H181 and E183. Residues 208 to 400 (WKPSSIIEDA…LGLPYNMLYR (193 aa)) enclose the GMPS ATP-PPase domain. Residue 235-241 (SGGVDSS) participates in ATP binding.

In terms of assembly, homodimer.

It catalyses the reaction XMP + L-glutamine + ATP + H2O = GMP + L-glutamate + AMP + diphosphate + 2 H(+). The protein operates within purine metabolism; GMP biosynthesis; GMP from XMP (L-Gln route): step 1/1. Catalyzes the synthesis of GMP from XMP. The sequence is that of GMP synthase [glutamine-hydrolyzing] from Shewanella baltica (strain OS223).